Consider the following 309-residue polypeptide: Tagatose-6-phosphate kinase (309 aa).

This sequence belongs to the carbohydrate kinase PfkB family. LacC subfamily.

It catalyses the reaction D-tagatofuranose 6-phosphate + ATP = D-tagatofuranose 1,6-bisphosphate + ADP + H(+). It participates in carbohydrate metabolism; D-tagatose 6-phosphate degradation; D-glyceraldehyde 3-phosphate and glycerone phosphate from D-tagatose 6-phosphate: step 1/2. The polypeptide is Tagatose-6-phosphate kinase (Streptococcus pneumoniae (strain Taiwan19F-14)).